Here is a 275-residue protein sequence, read N- to C-terminus: Small ribosomal subunit protein uS3 (275 aa).

The KH type-2 domain occupies 38–106 (IRKLLATGLE…QVQLNILEVK (69 aa)). The interval 215–275 (AAAAPASDRP…AEAPAESTES (61 aa)) is disordered. The span at 237–275 (SGSAGTTATSTEAGRAATSDAPAAGTAAAAEAPAESTES) shows a compositional bias: low complexity.

The protein belongs to the universal ribosomal protein uS3 family. Part of the 30S ribosomal subunit. Forms a tight complex with proteins S10 and S14.

Its function is as follows. Binds the lower part of the 30S subunit head. Binds mRNA in the 70S ribosome, positioning it for translation. This is Small ribosomal subunit protein uS3 from Mycolicibacterium smegmatis (strain ATCC 700084 / mc(2)155) (Mycobacterium smegmatis).